The chain runs to 253 residues: MMPILVTLNKISVTFGSRRVLNDISLSLRPGKILTLLGPNGAGKSTLVRVVLGLIPPSSGSLVREPGLRIGYVPQKLHLDATLPLTVSRFMRLKPGVKKADILPALTRVQAAHLLDQPMQKLSGGENQRVLLARALLNRPQLLVLDEPTQGVDVNGQLALYDLIEQLRKELGCAVLMVSHDLHLVMAKTDEVLCLNQHICCSGAPEVISTHPEFIAMFGNRGAEQLAVYRHNHNHRHDLHGKIILKNSGSRGA.

The 222-residue stretch at 6 to 227 (VTLNKISVTF…FGNRGAEQLA (222 aa)) folds into the ABC transporter domain. 38-45 (GPNGAGKS) contacts ATP.

It belongs to the ABC transporter superfamily. Zinc importer (TC 3.A.1.15.5) family. As to quaternary structure, the complex is composed of two ATP-binding proteins (ZnuC), two transmembrane proteins (ZnuB) and a solute-binding protein (ZnuA).

It localises to the cell inner membrane. The catalysed reaction is Zn(2+)(out) + ATP(in) + H2O(in) = Zn(2+)(in) + ADP(in) + phosphate(in) + H(+)(in). Part of the ABC transporter complex ZnuABC involved in zinc import. Responsible for energy coupling to the transport system. The chain is Zinc import ATP-binding protein ZnuC from Yersinia pseudotuberculosis serotype I (strain IP32953).